The following is a 1381-amino-acid chain: Serine-aspartate repeat-containing protein D (1381 aa).

Positions 1–35 (MLNRENKTAITRKGMVSNRLNKFSIRKYTVGTASI) are cleaved as a signal peptide. A YSIRK-G/S signaling motif motif is present at residues 23–34 (FSIRKYTVGTAS). The tract at residues 36-568 (LVGTTLIFGL…NNQSGGAGQE (533 aa)) is ligand binding A region. The disordered stretch occupies residues 54–185 (ESTNKELNEA…NKKVDAKTES (132 aa)). Composition is skewed to polar residues over residues 62 to 71 (EATTSASDNQ) and 94 to 108 (EMVS…SNGN). Basic and acidic residues predominate over residues 130 to 145 (KSDEQASPKSTNEDLN). Polar residues-rich tracts occupy residues 146–155 (TKQTISNQEA) and 163–173 (NKSVVNVQPTN). Basic and acidic residues predominate over residues 174 to 183 (EENKKVDAKT). CNA-B domains follow at residues 569–680 (VYKI…IYKP), 681–791 (KYNL…YKTP), 792–901 (KYNL…FYKP), 902–1012 (TYNL…YKTP), and 1013–1123 (KYSL…EEET). Disordered stretches follow at residues 857-883 (ETPS…TSTT), 972-992 (YTPT…GLTT), and 1078-1357 (EKPA…SNNA). Polar residues-rich tracts occupy residues 860-869 (SGYTPTQVGS) and 972-981 (YTPTSVTSGN). 4 stretches are compositionally biased toward acidic residues: residues 1091–1101 (TEDDKDADGGE), 1118–1134 (YYEE…DSDS), 1142–1164 (SDSD…DSDS), and 1172–1320 (SDSD…DSDS). Positions 1344–1348 (LPETG) match the LPXTG sorting signal motif. A Pentaglycyl murein peptidoglycan amidated threonine modification is found at T1347. The propeptide at 1348–1381 (GNENSGSNNATLFGGLFAALGSLLLFGRRKKQNK) is removed by sortase.

The protein belongs to the serine-aspartate repeat-containing protein (SDr) family. In terms of assembly, interacts with host DSG1; this interaction increases S.aureus adherence to keratinocytes.

Its subcellular location is the secreted. The protein resides in the cell wall. Cell surface-associated calcium-binding protein which plays an important role in adhesion and pathogenesis. Mediates interactions with components of the extracellular matrix such as host DSG1 to promote bacterial adhesion to host cells. Contributes to the resistance to killing by innate immune components such as neutrophils present in blood and thus attenuates bacterial clearance. This Staphylococcus aureus (strain USA300) protein is Serine-aspartate repeat-containing protein D (sdrD).